A 264-amino-acid chain; its full sequence is Type III pantothenate kinase (264 aa).

Residue 6–13 participates in ATP binding; that stretch reads DIGNTQTV. Substrate-binding positions include Tyr100 and 107–110; that span reads GADR. Asp109 functions as the Proton acceptor in the catalytic mechanism. Asp129 serves as a coordination point for K(+). Thr132 serves as a coordination point for ATP. Thr185 provides a ligand contact to substrate.

Belongs to the type III pantothenate kinase family. Homodimer. NH4(+) serves as cofactor. It depends on K(+) as a cofactor.

The protein localises to the cytoplasm. It carries out the reaction (R)-pantothenate + ATP = (R)-4'-phosphopantothenate + ADP + H(+). Its pathway is cofactor biosynthesis; coenzyme A biosynthesis; CoA from (R)-pantothenate: step 1/5. Catalyzes the phosphorylation of pantothenate (Pan), the first step in CoA biosynthesis. The protein is Type III pantothenate kinase of Rubrobacter xylanophilus (strain DSM 9941 / JCM 11954 / NBRC 16129 / PRD-1).